A 603-amino-acid polypeptide reads, in one-letter code: Elongation factor 4 (603 aa).

Residues 7–191 (DNIRNFSIVA…AIVTRLPPPK (185 aa)) form the tr-type G domain. Residues 19-24 (DHGKST) and 138-141 (NKVD) contribute to the GTP site.

It belongs to the TRAFAC class translation factor GTPase superfamily. Classic translation factor GTPase family. LepA subfamily.

It localises to the cell inner membrane. It catalyses the reaction GTP + H2O = GDP + phosphate + H(+). Its function is as follows. Required for accurate and efficient protein synthesis under certain stress conditions. May act as a fidelity factor of the translation reaction, by catalyzing a one-codon backward translocation of tRNAs on improperly translocated ribosomes. Back-translocation proceeds from a post-translocation (POST) complex to a pre-translocation (PRE) complex, thus giving elongation factor G a second chance to translocate the tRNAs correctly. Binds to ribosomes in a GTP-dependent manner. In Rhodopseudomonas palustris (strain BisA53), this protein is Elongation factor 4.